The following is a 360-amino-acid chain: DNA replication and repair protein RecF (360 aa).

30 to 37 lines the ATP pocket; that stretch reads GHNGSGKT.

Belongs to the RecF family.

The protein localises to the cytoplasm. In terms of biological role, the RecF protein is involved in DNA metabolism; it is required for DNA replication and normal SOS inducibility. RecF binds preferentially to single-stranded, linear DNA. It also seems to bind ATP. The protein is DNA replication and repair protein RecF of Haemophilus ducreyi (strain 35000HP / ATCC 700724).